The chain runs to 398 residues: ATP-dependent RNA helicase eIF4A (398 aa).

Residues 25–53 (DSFDTMNLKPELLRGVYAYGFERPSAIQQ) carry the Q motif motif. The region spanning 56–226 (IMPVIKGHDV…TKFMRDPVRI (171 aa)) is the Helicase ATP-binding domain. Residue 69-76 (AQSGTGKT) coordinates ATP. Residues 174–177 (DEAD) carry the DEAD box motif. The Helicase C-terminal domain occupies 237-398 (GIKQFYIAVE…EMPMNVADLI (162 aa)).

Belongs to the DEAD box helicase family. eIF4A subfamily. As to quaternary structure, component of the eIF4F complex, which composition varies with external and internal environmental conditions. It is composed of at least eIF4A, eIF4E and eIF4G.

The protein localises to the cytoplasm. It carries out the reaction ATP + H2O = ADP + phosphate + H(+). In terms of biological role, ATP-dependent RNA helicase which is a subunit of the eIF4F complex involved in cap recognition and is required for mRNA binding to ribosome. In the current model of translation initiation, eIF4A unwinds RNA secondary structures in the 5'-UTR of mRNAs which is necessary to allow efficient binding of the small ribosomal subunit, and subsequent scanning for the initiator codon. The polypeptide is ATP-dependent RNA helicase eIF4A (tif1) (Botryotinia fuckeliana (strain B05.10) (Noble rot fungus)).